The chain runs to 99 residues: MNKTEFIAFMTDHGHNHKHASHKTLTKADAEKALNLVLDSVISAIKSHHNINITGFGSFEIHHRKAREGRNPKTGAKMKIDAYNQPTFRAGRKMKEACN.

Positions 67-86 (REGRNPKTGAKMKIDAYNQP) are disordered.

This sequence belongs to the bacterial histone-like protein family. In terms of assembly, homodimer.

Its function is as follows. Histone-like DNA-binding protein which is capable of wrapping DNA to stabilize it, and thus to prevent its denaturation under extreme environmental conditions. The chain is DNA-binding protein HU (hup) from Rickettsia felis (strain ATCC VR-1525 / URRWXCal2) (Rickettsia azadi).